We begin with the raw amino-acid sequence, 120 residues long: NAD(P)H-quinone oxidoreductase subunit 3 (120 aa).

The next 3 membrane-spanning stretches (helical) occupy residues 10–30 (FLGFLLIAAAVPVLALVTNLI), 64–84 (MFALVFVIFDVETVFLYPWAV), and 89–109 (LGLLAFIEALIFIAILVIALA).

Belongs to the complex I subunit 3 family. As to quaternary structure, NDH-1 can be composed of about 15 different subunits; different subcomplexes with different compositions have been identified which probably have different functions.

Its subcellular location is the cellular thylakoid membrane. It catalyses the reaction a plastoquinone + NADH + (n+1) H(+)(in) = a plastoquinol + NAD(+) + n H(+)(out). The enzyme catalyses a plastoquinone + NADPH + (n+1) H(+)(in) = a plastoquinol + NADP(+) + n H(+)(out). Its function is as follows. NDH-1 shuttles electrons from an unknown electron donor, via FMN and iron-sulfur (Fe-S) centers, to quinones in the respiratory and/or the photosynthetic chain. The immediate electron acceptor for the enzyme in this species is believed to be plastoquinone. Couples the redox reaction to proton translocation, and thus conserves the redox energy in a proton gradient. Cyanobacterial NDH-1 also plays a role in inorganic carbon-concentration. The chain is NAD(P)H-quinone oxidoreductase subunit 3 from Prochlorococcus marinus (strain AS9601).